The sequence spans 672 residues: DNA-directed RNA polymerase subunit gamma (672 aa).

Cysteine 70, cysteine 72, cysteine 85, and cysteine 88 together coordinate Zn(2+). Positions 466, 468, and 470 each coordinate Mg(2+).

The protein belongs to the RNA polymerase beta' chain family. RpoC1 subfamily. In cyanobacteria the RNAP catalytic core is composed of 2 alpha, 1 beta, 1 beta', 1 gamma and 1 omega subunit. When a sigma factor is associated with the core the holoenzyme is formed, which can initiate transcription. Mg(2+) serves as cofactor. Zn(2+) is required as a cofactor.

The catalysed reaction is RNA(n) + a ribonucleoside 5'-triphosphate = RNA(n+1) + diphosphate. Its function is as follows. DNA-dependent RNA polymerase catalyzes the transcription of DNA into RNA using the four ribonucleoside triphosphates as substrates. In Trichodesmium erythraeum (strain IMS101), this protein is DNA-directed RNA polymerase subunit gamma.